An 89-amino-acid chain; its full sequence is Small ribosomal subunit protein uS17 (89 aa).

The protein belongs to the universal ribosomal protein uS17 family. Part of the 30S ribosomal subunit.

In terms of biological role, one of the primary rRNA binding proteins, it binds specifically to the 5'-end of 16S ribosomal RNA. The chain is Small ribosomal subunit protein uS17 from Bdellovibrio bacteriovorus (strain ATCC 15356 / DSM 50701 / NCIMB 9529 / HD100).